The following is a 340-amino-acid chain: Coproporphyrin III ferrochelatase (340 aa).

Fe-coproporphyrin III-binding residues include Ser52 and Tyr121. Fe(2+) contacts are provided by His181 and Glu264.

This sequence belongs to the ferrochelatase family.

The protein resides in the cytoplasm. It catalyses the reaction Fe-coproporphyrin III + 2 H(+) = coproporphyrin III + Fe(2+). It participates in porphyrin-containing compound metabolism; protoheme biosynthesis. In terms of biological role, involved in coproporphyrin-dependent heme b biosynthesis. Catalyzes the insertion of ferrous iron into coproporphyrin III to form Fe-coproporphyrin III. The protein is Coproporphyrin III ferrochelatase of Mycolicibacterium smegmatis (strain ATCC 700084 / mc(2)155) (Mycobacterium smegmatis).